Reading from the N-terminus, the 257-residue chain is MIEFRNVSKVYPNGTKGLNHINLKIQKGEFVVMVGLSGAGKSTLLRSVNRLHEITEGEIMIEGESITAAKGKGLRRMRRDIGMIFQSFNLVKRSTVLKNVLAGRVGYHSTLRTTLGIFPKEDLELAFQSLKRVNILEKAYARADELSGGQQQRVSIARALAQEAKIILADEPVASLDPLTTKQVLDDLKKINEDFGITTIVNLHSIDLARQYATRIIGLHAGEIVFDGLVEEATDEKFAEIYGDVAQKSELLEVAVK.

An ABC transporter domain is found at 2-246; it reads IEFRNVSKVY…KFAEIYGDVA (245 aa). 35–42 contributes to the ATP binding site; that stretch reads GLSGAGKS.

Belongs to the ABC transporter superfamily. Phosphonates importer (TC 3.A.1.9.1) family. As to quaternary structure, the complex is composed of two ATP-binding proteins (PhnC), two transmembrane proteins (PhnE) and a solute-binding protein (PhnD).

Its subcellular location is the cell membrane. It carries out the reaction phosphonate(out) + ATP + H2O = phosphonate(in) + ADP + phosphate + H(+). Part of the ABC transporter complex PhnCDE involved in phosphonates import. Responsible for energy coupling to the transport system. This chain is Phosphonates import ATP-binding protein PhnC, found in Bacillus cereus (strain ATCC 10987 / NRS 248).